A 233-amino-acid polypeptide reads, in one-letter code: Biosynthetic peptidoglycan transglycosylase (233 aa).

The helical transmembrane segment at 8–28 (LIALPVGIFIFFNAYVYGNII) threads the bilayer.

Belongs to the glycosyltransferase 51 family.

The protein resides in the cell inner membrane. The catalysed reaction is [GlcNAc-(1-&gt;4)-Mur2Ac(oyl-L-Ala-gamma-D-Glu-L-Lys-D-Ala-D-Ala)](n)-di-trans,octa-cis-undecaprenyl diphosphate + beta-D-GlcNAc-(1-&gt;4)-Mur2Ac(oyl-L-Ala-gamma-D-Glu-L-Lys-D-Ala-D-Ala)-di-trans,octa-cis-undecaprenyl diphosphate = [GlcNAc-(1-&gt;4)-Mur2Ac(oyl-L-Ala-gamma-D-Glu-L-Lys-D-Ala-D-Ala)](n+1)-di-trans,octa-cis-undecaprenyl diphosphate + di-trans,octa-cis-undecaprenyl diphosphate + H(+). It functions in the pathway cell wall biogenesis; peptidoglycan biosynthesis. Its function is as follows. Peptidoglycan polymerase that catalyzes glycan chain elongation from lipid-linked precursors. This chain is Biosynthetic peptidoglycan transglycosylase, found in Neisseria gonorrhoeae (strain ATCC 700825 / FA 1090).